The sequence spans 501 residues: MQPLLQLQGITKSFPGVKALSGAALNVYPGKVMALVGENGAGKSTMMKVLTGIYRKDAGSIHFLGQEVDFNGPKASQEAGIGIIHQELNLIPQLTIAENIFLGREFTNRFGRIDWNKMYAEADKLLKRLNLRYDSRRMVGDLSIGDQQMVEIAKVLSFESKVIIMDEPTDALTDTETASLFSVINELQSQGCGIVYISHRLKEIFEICDDITVFRDGQFIGERPVSDLEEDTLIEMMVGRKLEDQYPRSNKAPGEVRLKVQNLSGPGVDSVSFTVRKGEILGVAGLMGAGRTELMKILYGALPRTGGNVTLDGRDVVTRKPQDGLANGIVYISEDRKRDGLVLGMSVKENMSLTALRYFSHAGGRLKHAEEQLTVADFIRLFNVKTPSMEQPIGLLSGGNQQKVAIARGLMTRPNVLILDEPTRGVDVGAKKEIYQLINQFKEEGLSIILVSSEMPEVLGMSDRIIVMHEGRLSGDFPIEQATQEALMAAAVGKQYGAKQE.

2 consecutive ABC transporter domains span residues 5-241 (LQLQ…VGRK) and 252-495 (APGE…VGKQ). Position 37-44 (37-44 (GENGAGKS)) interacts with ATP.

Belongs to the ABC transporter superfamily. Ribose importer (TC 3.A.1.2.1) family. The complex is composed of an ATP-binding protein (RbsA), two transmembrane proteins (RbsC) and a solute-binding protein (RbsB).

It is found in the cell inner membrane. The catalysed reaction is D-ribose(out) + ATP + H2O = D-ribose(in) + ADP + phosphate + H(+). In terms of biological role, part of the ABC transporter complex RbsABC involved in ribose import. Responsible for energy coupling to the transport system. This chain is Ribose import ATP-binding protein RbsA, found in Pectobacterium atrosepticum (strain SCRI 1043 / ATCC BAA-672) (Erwinia carotovora subsp. atroseptica).